Here is a 178-residue protein sequence, read N- to C-terminus: Endoribonuclease YbeY (178 aa).

3 residues coordinate Zn(2+): H118, H122, and H128.

It belongs to the endoribonuclease YbeY family. It depends on Zn(2+) as a cofactor.

It is found in the cytoplasm. Single strand-specific metallo-endoribonuclease involved in late-stage 70S ribosome quality control and in maturation of the 3' terminus of the 16S rRNA. This chain is Endoribonuclease YbeY, found in Mycolicibacterium gilvum (strain PYR-GCK) (Mycobacterium gilvum (strain PYR-GCK)).